Reading from the N-terminus, the 166-residue chain is Transcriptional repressor NrdR (166 aa).

Residues 3-34 (CPFCRNPDSRVVDSRMADDGSSIRRRRQCPEC) fold into a zinc finger. Positions 46–136 (LSVIKRSGVG…VYQAFESLED (91 aa)) constitute an ATP-cone domain.

The protein belongs to the NrdR family. The cofactor is Zn(2+).

Negatively regulates transcription of bacterial ribonucleotide reductase nrd genes and operons by binding to NrdR-boxes. In Paenarthrobacter aurescens (strain TC1), this protein is Transcriptional repressor NrdR.